A 547-amino-acid chain; its full sequence is CTP synthase (547 aa).

The amidoligase domain stretch occupies residues 1–267; sequence MTKFVFVTGG…AQQTLALLNL (267 aa). Residue serine 13 participates in CTP binding. Serine 13 contacts UTP. Residues 14-19 and aspartate 71 contribute to the ATP site; that span reads SIGKGI. The Mg(2+) site is built by aspartate 71 and glutamate 141. CTP is bound by residues 148–150, 188–193, and lysine 224; these read DIE and KTKPTQ. Residues 188-193 and lysine 224 contribute to the UTP site; that span reads KTKPTQ. The Glutamine amidotransferase type-1 domain maps to 292-534; that stretch reads EIALVGKYVQ…VKAAVDHYST (243 aa). Position 354 (glycine 354) interacts with L-glutamine. Cysteine 381 functions as the Nucleophile; for glutamine hydrolysis in the catalytic mechanism. L-glutamine contacts are provided by residues 382–385, glutamate 405, and arginine 462; that span reads LGMQ. Active-site residues include histidine 507 and glutamate 509.

It belongs to the CTP synthase family. In terms of assembly, homotetramer.

The enzyme catalyses UTP + L-glutamine + ATP + H2O = CTP + L-glutamate + ADP + phosphate + 2 H(+). It catalyses the reaction L-glutamine + H2O = L-glutamate + NH4(+). The catalysed reaction is UTP + NH4(+) + ATP = CTP + ADP + phosphate + 2 H(+). It participates in pyrimidine metabolism; CTP biosynthesis via de novo pathway; CTP from UDP: step 2/2. With respect to regulation, allosterically activated by GTP, when glutamine is the substrate; GTP has no effect on the reaction when ammonia is the substrate. The allosteric effector GTP functions by stabilizing the protein conformation that binds the tetrahedral intermediate(s) formed during glutamine hydrolysis. Inhibited by the product CTP, via allosteric rather than competitive inhibition. Functionally, catalyzes the ATP-dependent amination of UTP to CTP with either L-glutamine or ammonia as the source of nitrogen. Regulates intracellular CTP levels through interactions with the four ribonucleotide triphosphates. This Rippkaea orientalis (strain PCC 8801 / RF-1) (Cyanothece sp. (strain PCC 8801)) protein is CTP synthase.